The sequence spans 230 residues: TorCAD operon transcriptional regulatory protein TorR (230 aa).

The 114-residue stretch at 4–117 (HIVIVEDEPV…ELVVRVKNLL (114 aa)) folds into the Response regulatory domain. Asp53 carries the post-translational modification 4-aspartylphosphate. Residues 132-227 (DNCYRFAGYC…QHGEGYFLAA (96 aa)) constitute a DNA-binding region (ompR/PhoB-type).

In terms of assembly, interacts with TorI. TorI binds to the effector domain of TorR. This interaction, which does not interfere with TorR DNA binding activity, probably prevents the recruitment of RNA polymerase to the torCAD promoter. In terms of processing, phosphorylated and dephosphorylated by TorS.

The protein localises to the cytoplasm. In terms of biological role, member of the two-component regulatory system TorS/TorR involved in the anaerobic utilization of trimethylamine-N-oxide (TMAO). Phosphorylated TorR activates the transcription of the torCAD operon by binding to four decameric boxes located in the torCAD promoter. Box1, 2 and 4 contain the DNA sequence 5'-CTGTTCATAT-3' and box3 contains the DNA sequence 5'-CCGTTCATCC-3'. Phosphorylated as well as unphosphorylated TorR negatively regulates its own expression by binding to box1 and 2. The sequence is that of TorCAD operon transcriptional regulatory protein TorR (torR) from Escherichia coli (strain K12).